A 299-amino-acid polypeptide reads, in one-letter code: Ribosomal protein L11 methyltransferase (299 aa).

Positions 152, 172, 194, and 234 each coordinate S-adenosyl-L-methionine.

This sequence belongs to the methyltransferase superfamily. PrmA family.

The protein resides in the cytoplasm. It carries out the reaction L-lysyl-[protein] + 3 S-adenosyl-L-methionine = N(6),N(6),N(6)-trimethyl-L-lysyl-[protein] + 3 S-adenosyl-L-homocysteine + 3 H(+). Methylates ribosomal protein L11. The polypeptide is Ribosomal protein L11 methyltransferase (Geobacter metallireducens (strain ATCC 53774 / DSM 7210 / GS-15)).